A 559-amino-acid chain; its full sequence is Potassium-transporting ATPase potassium-binding subunit (559 aa).

The next 13 helical transmembrane spans lie at 5–25, 27–47, 63–83, 132–152, 170–190, 253–273, 283–303, 327–347, 356–376, 379–399, 416–436, 484–504, and 524–544; these read GFLL…PLGS, LARL…RILW, LLAL…LLFW, GLTV…FALI, LVRI…LFFI, LAQM…FGEA, LLWA…WAEV, FGVL…CGAV, ALGG…FGGV, GLYG…LMIG, MTAL…ALAM, LLAF…MAIA, and GALF…LTFI.

This sequence belongs to the KdpA family. As to quaternary structure, the system is composed of three essential subunits: KdpA, KdpB and KdpC.

The protein resides in the cell inner membrane. In terms of biological role, part of the high-affinity ATP-driven potassium transport (or Kdp) system, which catalyzes the hydrolysis of ATP coupled with the electrogenic transport of potassium into the cytoplasm. This subunit binds the periplasmic potassium ions and delivers the ions to the membrane domain of KdpB through an intramembrane tunnel. This Salmonella typhimurium (strain LT2 / SGSC1412 / ATCC 700720) protein is Potassium-transporting ATPase potassium-binding subunit.